A 354-amino-acid polypeptide reads, in one-letter code: Protein-glutamate methylesterase/protein-glutamine glutaminase of group 3 operon (354 aa).

A Response regulatory domain is found at 3–121 (RILLATSTVE…MQLEQPAIEK (119 aa)). A CheB-type methylesterase domain is found at 158 to 340 (PIGIVGIAAS…LESIAENITA (183 aa)). Catalysis depends on residues Ser167, His194, and Asp287.

This sequence belongs to the CheB family.

The protein localises to the cytoplasm. The enzyme catalyses [protein]-L-glutamate 5-O-methyl ester + H2O = L-glutamyl-[protein] + methanol + H(+). It catalyses the reaction L-glutaminyl-[protein] + H2O = L-glutamyl-[protein] + NH4(+). In terms of biological role, involved in chemotaxis. Part of a chemotaxis signal transduction system that modulates chemotaxis in response to various stimuli. Catalyzes the demethylation of specific methylglutamate residues introduced into the chemoreceptors (methyl-accepting chemotaxis proteins or MCP) by CheR. Also mediates the irreversible deamidation of specific glutamine residues to glutamic acid. In Rhizobium meliloti (strain 1021) (Ensifer meliloti), this protein is Protein-glutamate methylesterase/protein-glutamine glutaminase of group 3 operon.